The chain runs to 521 residues: tRNA (adenine(58)-N(1))-methyltransferase non-catalytic subunit trm6 (521 aa).

Disordered regions lie at residues 1–24 (METE…NNNN), 305–336 (IYDK…AKTI), and 452–521 (QKST…KIDE). Residues 12 to 24 (KSTTSNTNDNNNN) show a composition bias toward low complexity. The segment covering 308 to 334 (KQVKEKEKEKEKDENVKDEKESGEEAK) has biased composition (basic and acidic residues). 2 stretches are compositionally biased toward low complexity: residues 452 to 476 (QKST…TKTT) and 487 to 502 (DATT…AATT). Positions 510-521 (SESALKKRKIDE) are enriched in basic and acidic residues.

This sequence belongs to the TRM6/GCD10 family. As to quaternary structure, heterotetramer; composed of two copies of trmt6 and two copies of trmt61a.

The protein localises to the nucleus. Substrate-binding subunit of tRNA (adenine-N(1)-)-methyltransferase, which catalyzes the formation of N(1)-methyladenine at position 58 (m1A58) in initiator methionyl-tRNA. The sequence is that of tRNA (adenine(58)-N(1))-methyltransferase non-catalytic subunit trm6 (trmt6) from Dictyostelium discoideum (Social amoeba).